A 751-amino-acid polypeptide reads, in one-letter code: Amyloid-beta precursor protein (751 aa).

The first 17 residues, 1-17 (MLPGLALLLLAAWTARA), serve as a signal peptide directing secretion. Residues 18–682 (LEVPTDGNAG…AEDVGSNKGA (665 aa)) lie on the Extracellular side of the membrane. The interval 28–123 (LLAEPQIAMF…PYRCLVGEFV (96 aa)) is GFLD subdomain. Residues 28 to 189 (LLAEPQIAMF…RGVEFVCCPL (162 aa)) enclose the E1 domain. 6 disulfides stabilise this stretch: Cys-38-Cys-62, Cys-73-Cys-117, Cys-98-Cys-105, Cys-133-Cys-187, Cys-144-Cys-174, and Cys-158-Cys-186. Residue 96 to 110 (NWCKRDRKQCKTHPH) coordinates heparin. A cuBD subdomain region spans residues 131 to 189 (DKCKFLHQERMDVCETHLHWHTVAKETCSEKSTNLHDYGMLLPCGIDKFRGVEFVCCPL). 3 residues coordinate Cu(2+): His-147, His-151, and Tyr-168. A zinc-binding region spans residues 181–188 (GVEFVCCP). 3 residues coordinate Zn(2+): Glu-183, Cys-186, and Cys-187. The tract at residues 195–284 (HVDSADAEED…TTTTTTESVE (90 aa)) is disordered. Phosphoserine; by CK1 and CK2 is present on residues Ser-198 and Ser-206. Tyr-217 and Tyr-262 each carry sulfotyrosine. Residues 228–264 (VAEEEEVAEVEEEEADDDEDDEDGDEVEEEAEEPYEE) are compositionally biased toward acidic residues. Over residues 268–281 (RTTSIATTTTTTTE) the composition is skewed to low complexity. 3 disulfide bridges follow: Cys-291–Cys-341, Cys-300–Cys-324, and Cys-316–Cys-337. The region spanning 291–341 (CSEQAETGPCRAMISRWYFDVTEGKCAPFFYGGCGGNRNNFDTEEYCMAVC) is the BPTI/Kunitz inhibitor domain. Heparin-binding regions lie at residues 316 to 344 (CAPF…CGSV) and 363 to 428 (PGDE…QEAA). A Sulfotyrosine modification is found at Tyr-336. Residues 344–346 (VIP) carry the OX-2 motif. The 192-residue stretch at 355–546 (AVDKYLETPG…EEIQDEVDEL (192 aa)) folds into the E2 domain. The residue at position 422 (Ser-422) is a Phosphoserine. A Phosphotyrosine modification is found at Tyr-478. The collagen-binding stretch occupies residues 504 to 521 (AAQIRSQVMTHLRVIYER). N-linked (GlcNAc...) asparagine glycosylation is found at Asn-523 and Asn-552. His-658, Tyr-662, His-665, and His-666 together coordinate Cu(2+). Zn(2+) is bound by residues His-658, Tyr-662, His-665, and His-666. Residues 676–703 (VGSNKGAIIGLMVGGVVIATVIVITLVM) form an interaction with PSEN1 region. Residues 683 to 703 (IIGLMVGGVVIATVIVITLVM) form a helical membrane-spanning segment. The Cytoplasmic segment spans residues 704 to 751 (LKKKQYTSIHHGVVEVDAAVTPEERHLSKMQQNGYENPTYKFFEQMQN). Positions 705–715 (KKKQYTSIHHG) match the Basolateral sorting signal motif. At Thr-710 the chain carries Phosphothreonine. Position 711 is a phosphoserine; by APP-kinase I (Ser-711). Residues 713-732 (HHGVVEVDAAVTPEERHLSK) are interaction with G(o)-alpha. At Thr-724 the chain carries Phosphothreonine; by CDK5 and MAPK10. Residues 737 to 751 (GYENPTYKFFEQMQN) form a required for the interaction with KIF5B and for anterograde transport in axons region. A Phosphotyrosine; by ABL1 modification is found at Tyr-738. A YENPXY motif; contains endocytosis signal motif is present at residues 738 to 743 (YENPTY). Lys-744 participates in a covalent cross-link: Glycyl lysine isopeptide (Lys-Gly) (interchain with G-Cter in ubiquitin).

Belongs to the APP family. As to quaternary structure, binds, via its C-terminus, to the PID domain of several cytoplasmic proteins, including APBB family members, the APBA family, MAPK8IP1, SHC1 and NUMB and DAB1. Binding to DAB1 inhibits its serine phosphorylation. Interacts (via NPXY motif) with DAB2 (via PID domain); the interaction is impaired by tyrosine phosphorylation of the NPXY motif. Also interacts with GPCR-like protein BPP, APPBP1, IB1, KNS2 (via its TPR domains), APPBP2 (via BaSS) and DDB1. In vitro, it binds MAPT via the MT-binding domains. Associates with microtubules in the presence of ATP and in a kinesin-dependent manner. Interacts, through a C-terminal domain, with GNAO1. Amyloid-beta protein 42 binds CHRNA7 in hippocampal neurons. Amyloid-beta associates with HADH2. Interacts with CPEB1, ANKS1B and AGER. Interacts with ITM2B. Interacts with ITM2C. Interacts with IDE. Can form homodimers; dimerization is enhanced in the presence of Cu(2+) ions. Can form homodimers; this is promoted by heparin binding. Amyloid-beta protein 40 interacts with S100A9. CTF-alpha product of APP interacts with GSAP. Isoform APP695 interacts with SORL1 (via N-terminal ectodomain); this interaction retains APP in the trans-Golgi network and reduces processing into soluble APP-alpha and amyloid-beta peptides. Isoform APP770 interacts with SORL1. The C99 fragment also interacts with SORL1. Interacts with PLD3. Interacts with VDAC1. Interacts with NSG1; could regulate APP processing. Amyloid-beta protein 42 interacts with FPR2. Interacts (via transmembrane region) with PSEN1; the interaction is direct. Interacts with LRRK2. Interacts (via cytoplasmic domain) with KIF5B. Interacts (via C-terminus) with APBB2/FE65L1 (via C-terminus). Interacts (via intracellular domain) with APBB3. Post-translationally, proteolytically processed under normal cellular conditions. Cleavage either by alpha-secretase, beta-secretase or theta-secretase leads to generation and extracellular release of soluble APP peptides, S-APP-alpha and S-APP-beta, and the retention of corresponding membrane-anchored C-terminal fragments, C80, C83 and C99. Subsequent processing of C80 and C83 by gamma-secretase yields P3 peptides. This is the major secretory pathway and is non-amyloidogenic. Alternatively, presenilin/nicastrin-mediated gamma-secretase processing of C99 releases the amyloid-beta proteins, amyloid-beta protein 40 and amyloid-beta protein 42, major components of amyloid plaques, and the cytotoxic C-terminal fragments, gamma-CTF(50), gamma-CTF(57) and gamma-CTF(59). PSEN1 cleavage is more efficient with C83 than with C99 as substrate (in vitro). Amyloid-beta protein 40 and Amyloid-beta protein 42 are cleaved by ACE. Many other minor amyloid-beta peptides, amyloid-beta 1-X peptides, are found in cerebral spinal fluid (CSF) including the amyloid-beta X-15 peptides, produced from the cleavage by alpha-secretase. Proteolytically cleaved by caspases during neuronal apoptosis. Cleavage at Asp-720 by either caspase-3, -8 or -9 results in the production of the neurotoxic C31 peptide and the increased production of amyloid-beta peptides. In terms of processing, N- and O-glycosylated. Post-translationally, phosphorylation in the C-terminal on tyrosine, threonine and serine residues is neuron-specific. Phosphorylation can affect APP processing, neuronal differentiation and interaction with other proteins. Phosphorylated on Thr-724 in neuronal cells by Cdc5 kinase and Mapk10, in dividing cells by Cdc2 kinase in a cell-cycle dependent manner with maximal levels at the G2/M phase and, in vitro, by GSK-3-beta. The Thr-724 phosphorylated form causes a conformational change which reduces binding of Fe65 family members. In dopaminergic (DA) neurons, phosphorylation on Thr-724 by LRKK2 promotes the production and the nuclear translocation of the APP intracellular domain (AICD) which induces DA neuron apoptosis. Phosphorylation on Tyr-738 is required for SHC binding. Phosphorylated in the extracellular domain by casein kinases on both soluble and membrane-bound APP. This phosphorylation is inhibited by heparin. Trophic-factor deprivation triggers the cleavage of surface APP by beta-secretase to release sAPP-beta which is further cleaved to release an N-terminal fragment of APP (N-APP). In terms of processing, amyloid-beta peptides are degraded by IDE. Post-translationally, sulfated on tyrosine residues.

It localises to the cell membrane. Its subcellular location is the membrane. The protein localises to the perikaryon. The protein resides in the cell projection. It is found in the growth cone. It localises to the clathrin-coated pit. Its subcellular location is the early endosome. The protein localises to the cytoplasmic vesicle. The protein resides in the endoplasmic reticulum. It is found in the golgi apparatus. It localises to the secreted. Its subcellular location is the cell surface. The protein localises to the nucleus. The protein resides in the cytoplasm. In terms of biological role, functions as a cell surface receptor and performs physiological functions on the surface of neurons relevant to neurite growth, neuronal adhesion and axonogenesis. Interaction between APP molecules on neighboring cells promotes synaptogenesis. Involved in cell mobility and transcription regulation through protein-protein interactions. Can promote transcription activation through binding to APBB1-KAT5 and inhibit Notch signaling through interaction with Numb. Couples to apoptosis-inducing pathways such as those mediated by G(o) and JIP. Inhibits G(o)-alpha ATPase activity. Acts as a kinesin I membrane receptor, mediating the axonal transport of beta-secretase and presenilin 1. By acting as a kinesin I membrane receptor, plays a role in axonal anterograde transport of cargo towards synapses in axons. May be involved in copper homeostasis/oxidative stress through copper ion reduction. In vitro, copper-metallated APP induces neuronal death directly or is potentiated through Cu(2+)-mediated low-density lipoprotein oxidation. Can regulate neurite outgrowth through binding to components of the extracellular matrix such as heparin and collagen I and IV. Induces a AGER-dependent pathway that involves activation of p38 MAPK, resulting in internalization of amyloid-beta peptide and mitochondrial dysfunction in cultured cortical neurons. Provides Cu(2+) ions for GPC1 which are required for release of nitric oxide (NO) and subsequent degradation of the heparan sulfate chains on GPC1. Amyloid-beta peptides are lipophilic metal chelators with metal-reducing activity. Binds transient metals such as copper, zinc and iron. Its function is as follows. The gamma-CTF peptides as well as the caspase-cleaved peptides, including C31, are potent enhancers of neuronal apoptosis. In Saimiri sciureus (Common squirrel monkey), this protein is Amyloid-beta precursor protein.